The chain runs to 446 residues: MAYPQGYLYQPSASLALYSCPAYSTSVISGPRTEELGRSSSGSAFAPYAGSTAFTSASPGYNSHLPYSADAAAAATFTSYVSSPYDHTTGMAGSIGYHPYAAPLGSYPYGDPAYRKNATRDATATLKAWLNEHRKNPYPTKGEKIMLAIITKMTLTQVSTWFANARRRLKKENKMTWTPRNRSEDEEEDENIDLEKNDDDEPNKPTDKGDSTDTEADHKLINPGEIPCDRFKDETHSKDLDPPLTDSELKEAEERTDLLAEQAKPTTSSPSVLQRGSDLITQEKPSEPGHAASTGNSNVTSVIHSPPSAPKPKLWSLAEIATSSDRCKGSSEASQAAGLSQSTVIASAASPTRSSPQCPLPNNTVLSRPIYYTSPFYPGYTNYSTFGHLHSSHGTNTSSTAHFNGLSQTVLNRAEALVRESKVRSQTQVDLCKDSPYELKKGMSNI.

The homeobox DNA-binding region spans asparagine 117 to asparagine 173. The disordered stretch occupies residues methionine 175–proline 312. Positions glutamate 184 to glutamate 201 are enriched in acidic residues. Basic and acidic residues-rich tracts occupy residues proline 202–leucine 220 and proline 227–leucine 258. 2 stretches are compositionally biased toward polar residues: residues lysine 264 to glutamine 274 and serine 293 to isoleucine 303.

It belongs to the TALE/IRO homeobox family.

Its subcellular location is the nucleus. Its function is as follows. Transcription factor. Binds to consensus iroquois binding site (IBS) motifs 5'-ACANNTGT-3' or 5'-ACANNNTGT-3' in regulatory elements of target genes. Required, together with irx7, for hyoid joint formation; they act cell autonomously to repress expression of cartilage matrix genes, such as collagen col2a1a, within immature chondrocytes of the joint interzone. May compete with or modify Sox9a activity, thereby reducing Sox9a-mediated activation of col2a1a. Probably acts in the developing hyoid joint downstream of Bmp signaling. In concert with irx6a, plays a role in visual performance. This chain is Iroquois homeobox protein 5a (irx5a), found in Danio rerio (Zebrafish).